We begin with the raw amino-acid sequence, 122 residues long: Large ribosomal subunit protein uL14 (122 aa).

It belongs to the universal ribosomal protein uL14 family. In terms of assembly, part of the 50S ribosomal subunit. Forms a cluster with proteins L3 and L19. In the 70S ribosome, L14 and L19 interact and together make contacts with the 16S rRNA in bridges B5 and B8.

Binds to 23S rRNA. Forms part of two intersubunit bridges in the 70S ribosome. The sequence is that of Large ribosomal subunit protein uL14 from Lawsonia intracellularis (strain PHE/MN1-00).